The chain runs to 637 residues: Mitochondrial Rho GTPase 1 (637 aa).

The Cytoplasmic segment spans residues 1–613 (MSDGETLADV…LRRVFYLSDS (613 aa)). The region spanning 7 to 184 (LADVRIVLIG…FYYAQKAVIY (178 aa)) is the Miro 1 domain. Residues 28-35 (SLLEDEWV), 74-78 (ISEMR), and 135-138 (LPSG) each bind GTP. 2 consecutive EF-hand domains span residues 200 to 235 (RAKKALIRVFKICDRDNDGYLSDTELNDFQKLCFGI) and 320 to 355 (EGVQFVSALFEKYDEDKDGCLSPSELQNLFSVCSAP). Residues Asp-213, Asp-215, Asp-217, Tyr-219, Glu-224, Asp-333, Asp-335, Asp-337, Cys-339, and Glu-344 each contribute to the Ca(2+) site. Residues 436–601 (RKVFQCLVVG…FEQLAMMAVY (166 aa)) enclose the Miro 2 domain. GTP contacts are provided by residues 445-452 (GAKDAGKT), 482-486 (KVKEE), and 549-552 (TKVE). The chain crosses the membrane as a helical; Anchor for type IV membrane protein span at residues 614–634 (NLLSKITFGAAIVALAGFLVL). Topologically, residues 635–637 (KNL) are mitochondrial intermembrane.

The protein belongs to the mitochondrial Rho GTPase family.

The protein resides in the mitochondrion outer membrane. Mitochondrial GTPase involved in mitochondrial trafficking. Probably involved in control of anterograde transport of mitochondria and their subcellular distribution. The polypeptide is Mitochondrial Rho GTPase 1 (Caenorhabditis briggsae).